Here is a 265-residue protein sequence, read N- to C-terminus: Glutamate racemase (265 aa).

Substrate is bound by residues 12 to 13 (DS) and 44 to 45 (YG). Catalysis depends on C75, which acts as the Proton donor/acceptor. Residue 76–77 (NT) coordinates substrate. Residue C186 is the Proton donor/acceptor of the active site. 187 to 188 (TH) lines the substrate pocket.

Belongs to the aspartate/glutamate racemases family.

It catalyses the reaction L-glutamate = D-glutamate. It functions in the pathway cell wall biogenesis; peptidoglycan biosynthesis. Its function is as follows. Provides the (R)-glutamate required for cell wall biosynthesis. The chain is Glutamate racemase from Pseudomonas paraeruginosa (strain DSM 24068 / PA7) (Pseudomonas aeruginosa (strain PA7)).